A 271-amino-acid polypeptide reads, in one-letter code: tRNA (guanine-N(1)-)-methyltransferase (271 aa).

Residues G120 and 145–150 each bind S-adenosyl-L-methionine; that span reads IGDYVL.

The protein belongs to the RNA methyltransferase TrmD family. Homodimer.

The protein resides in the cytoplasm. It carries out the reaction guanosine(37) in tRNA + S-adenosyl-L-methionine = N(1)-methylguanosine(37) in tRNA + S-adenosyl-L-homocysteine + H(+). Its function is as follows. Specifically methylates guanosine-37 in various tRNAs. The chain is tRNA (guanine-N(1)-)-methyltransferase from Bifidobacterium longum subsp. infantis (strain ATCC 15697 / DSM 20088 / JCM 1222 / NCTC 11817 / S12).